The chain runs to 213 residues: Peptidoglycan-N-acetylglucosamine deacetylase BC_3618 (213 aa).

Positions 22–203 (KIIAITFDDG…ELKKQGYRFV (182 aa)) constitute a NodB homology domain. The Proton acceptor role is filled by D29. The Zn(2+) site is built by D30, H80, and H84. H175 acts as the Proton donor in catalysis.

Belongs to the polysaccharide deacetylase family. Zn(2+) serves as cofactor.

It catalyses the reaction peptidoglycan-N-acetyl-D-glucosamine + H2O = peptidoglycan-D-glucosamine + acetate.. Its activity is regulated as follows. Inhibited by CuCl(2) and ZnCl(2). Catalyzes the deacetylation of N-acetylglucosamine (GlcNAc) residues in peptidoglycan. Also acts on soluble chitin substrates and N-acetylchitooligomers. Acts on cell wall peptidoglycan from the Gram-positive bacteria B.cereus and B.subtilis and the Gram-negative bacterium H.pylori. Not active on acetylated xylan. The sequence is that of Peptidoglycan-N-acetylglucosamine deacetylase BC_3618 from Bacillus cereus (strain ATCC 14579 / DSM 31 / CCUG 7414 / JCM 2152 / NBRC 15305 / NCIMB 9373 / NCTC 2599 / NRRL B-3711).